A 50-amino-acid polypeptide reads, in one-letter code: Cytochrome c oxidase subunit 4 (50 aa).

Topologically, residues 2-17 (ASHHEITDHKHGEMDI) are cytoplasmic. A helical membrane pass occupies residues 18–49 (RHQQATFAGFIKGATWVSILSIAVLVFLALAN). Residue Ser50 is a topological domain, periplasmic.

It is found in the cell inner membrane. It catalyses the reaction 4 Fe(II)-[cytochrome c] + O2 + 8 H(+)(in) = 4 Fe(III)-[cytochrome c] + 2 H2O + 4 H(+)(out). Its function is as follows. Not required for enzymatic activity or proton pumping of the cytochrome c oxidase complex. The protein is Cytochrome c oxidase subunit 4 (ctaH) of Paracoccus denitrificans.